The primary structure comprises 572 residues: Proline--tRNA ligase (572 aa).

The protein belongs to the class-II aminoacyl-tRNA synthetase family. ProS type 1 subfamily. As to quaternary structure, homodimer.

It localises to the cytoplasm. The enzyme catalyses tRNA(Pro) + L-proline + ATP = L-prolyl-tRNA(Pro) + AMP + diphosphate. Its function is as follows. Catalyzes the attachment of proline to tRNA(Pro) in a two-step reaction: proline is first activated by ATP to form Pro-AMP and then transferred to the acceptor end of tRNA(Pro). As ProRS can inadvertently accommodate and process non-cognate amino acids such as alanine and cysteine, to avoid such errors it has two additional distinct editing activities against alanine. One activity is designated as 'pretransfer' editing and involves the tRNA(Pro)-independent hydrolysis of activated Ala-AMP. The other activity is designated 'posttransfer' editing and involves deacylation of mischarged Ala-tRNA(Pro). The misacylated Cys-tRNA(Pro) is not edited by ProRS. The protein is Proline--tRNA ligase of Yersinia pseudotuberculosis serotype IB (strain PB1/+).